Consider the following 239-residue polypeptide: Probable transcriptional regulatory protein VC_A0006 (239 aa).

The protein belongs to the TACO1 family.

The protein localises to the cytoplasm. This is Probable transcriptional regulatory protein VC_A0006 from Vibrio cholerae serotype O1 (strain ATCC 39315 / El Tor Inaba N16961).